The following is an 82-amino-acid chain: Delta-actitoxin-Aeq2b 3 (82 aa).

The N-terminal stretch at 1-19 (MNRLMILVFAAVILALASA) is a signal peptide. Positions 20-26 (DEDVDIT) are excised as a propeptide. Cystine bridges form between cysteine 32-cysteine 79, cysteine 34-cysteine 69, and cysteine 62-cysteine 80.

Belongs to the sea anemone sodium channel inhibitory toxin family. Type I subfamily.

The protein localises to the secreted. It is found in the nematocyst. In terms of biological role, binds specifically to voltage-gated sodium channels (Nav), thereby delaying their inactivation during signal transduction. Causes death to crabs. This Actinia equina (Beadlet anemone) protein is Delta-actitoxin-Aeq2b 3.